The chain runs to 479 residues: Zinc metalloproteinase/disintegrin PMMP-1 (479 aa).

The signal sequence occupies residues 1–20 (MIQVLLVTICLAVFPYQGSS). Positions 21 to 188 (IILESGNVND…PIKKASKLVV (168 aa)) are excised as a propeptide. In terms of domain architecture, Peptidase M12B spans 194–390 (RYVELVIVAD…HNPQCILNKP (197 aa)). 3 cysteine pairs are disulfide-bonded: Cys-305–Cys-385, Cys-345–Cys-369, and Cys-347–Cys-352. A Zn(2+)-binding site is contributed by His-330. Glu-331 is an active-site residue. Residues His-334 and His-339 each contribute to the Zn(2+) site. Asn-368 carries N-linked (GlcNAc...) asparagine glycosylation. Residues 391 to 408 (LRTDTVSTPVSGNELLEA) constitute a propeptide that is removed on maturation. One can recognise a Disintegrin domain in the interval 398 to 479 (TPVSGNELLE…ADCPRNGLYG (82 aa)). 6 cysteine pairs are disulfide-bonded: Cys-412/Cys-427, Cys-414/Cys-422, Cys-421/Cys-444, Cys-435/Cys-441, Cys-440/Cys-465, and Cys-453/Cys-472. The Cell attachment site signature appears at 457 to 459 (RGD).

This sequence belongs to the venom metalloproteinase (M12B) family. P-II subfamily. P-IIa sub-subfamily. Monomer. The cofactor is Zn(2+). Expressed by the venom gland.

Its subcellular location is the secreted. In terms of biological role, impairs hemostasis in the envenomed animal. Inhibits platelet aggregation. The sequence is that of Zinc metalloproteinase/disintegrin PMMP-1 from Protobothrops mucrosquamatus (Taiwan habu).